Here is a 316-residue protein sequence, read N- to C-terminus: Apolipoprotein E (316 aa).

Positions 1 to 18 are cleaved as a signal peptide; it reads MKVLWVAVVVALLAGCQA. Thr-32 is a glycosylation site (O-linked (GalNAc...) threonine). 8 tandem repeats follow at residues 79-100, 101-122, 123-144, 145-166, 167-188, 189-210, 211-232, and 233-254. Residues 79–254 are 8 X 22 AA approximate tandem repeats; sequence ALMEETMKEV…RLDKIRQQLE (176 aa). Met-142 carries the post-translational modification Methionine sulfoxide. Ser-146 carries the post-translational modification Phosphoserine. The tract at residues 157-167 is LDL and other lipoprotein receptors binding; it reads HLRKLPKRLLR. 161–164 is a heparin binding site; sequence LPKR. The tract at residues 209-289 is lipid-binding and lipoprotein association; sequence AATLSTLAGQ…SWFEPLVEDM (81 aa). A glycan (O-linked (GalNAc...) threonine) is linked at Thr-211. 228 to 235 is a binding site for heparin; the sequence is RQKLHGRL. The tract at residues 265-316 is homooligomerization; it reads NQMRLQAEAFQARLRSWFEPLVEDMQRQWAGLVEKVQLALRPSPTSPPSENH. A specificity for association with VLDL region spans residues 277–289; the sequence is RLRSWFEPLVEDM. Residue Thr-309 is glycosylated (O-linked (GalNAc...) threonine). O-linked (GalNAc...) serine glycosylation occurs at Ser-310.

Belongs to the apolipoprotein A1/A4/E family. In terms of assembly, homotetramer. May interact with ABCA1; functionally associated with ABCA1 in the biogenesis of HDLs. May interact with APP/A4 amyloid-beta peptide; the interaction is extremely stable in vitro but its physiological significance is unclear. May interact with MAPT. May interact with MAP2. In the cerebrospinal fluid, interacts with secreted SORL1. Interacts with PMEL; this allows the loading of PMEL luminal fragment on ILVs to induce fibril nucleation. APOE exists as multiple glycosylated and sialylated glycoforms within cells and in plasma. The extent of glycosylation and sialylation are tissue and context specific. In terms of processing, glycated in plasma VLDL. Post-translationally, phosphorylated by FAM20C in the extracellular medium.

Its subcellular location is the secreted. The protein localises to the extracellular space. It is found in the extracellular matrix. It localises to the extracellular vesicle. The protein resides in the endosome. Its subcellular location is the multivesicular body. In terms of biological role, APOE is an apolipoprotein, a protein associating with lipid particles, that mainly functions in lipoprotein-mediated lipid transport between organs via the plasma and interstitial fluids. APOE is a core component of plasma lipoproteins and is involved in their production, conversion and clearance. Apolipoproteins are amphipathic molecules that interact both with lipids of the lipoprotein particle core and the aqueous environment of the plasma. As such, APOE associates with chylomicrons, chylomicron remnants, very low density lipoproteins (VLDL) and intermediate density lipoproteins (IDL) but shows a preferential binding to high-density lipoproteins (HDL). It also binds a wide range of cellular receptors including the LDL receptor/LDLR and the very low-density lipoprotein receptor/VLDLR that mediate the cellular uptake of the APOE-containing lipoprotein particles. Finally, APOE also has a heparin-binding activity and binds heparan-sulfate proteoglycans on the surface of cells, a property that supports the capture and the receptor-mediated uptake of APOE-containing lipoproteins by cells. This chain is Apolipoprotein E (APOE), found in Bos taurus (Bovine).